A 71-amino-acid polypeptide reads, in one-letter code: Large ribosomal subunit protein uL29 (71 aa).

Belongs to the universal ribosomal protein uL29 family. As to quaternary structure, part of the 50S ribosomal subunit. Interacts with protein L23.

Functionally, stabilizes the tertiary rRNA structure within the 23S rRNA domain (domain I) to which it binds. Located at the polypeptide exit tunnel on the outside of the subunit. The protein is Large ribosomal subunit protein uL29 (rpl29) of Haloarcula marismortui (strain ATCC 43049 / DSM 3752 / JCM 8966 / VKM B-1809) (Halobacterium marismortui).